Consider the following 213-residue polypeptide: Golgi apparatus membrane protein TVP23 homolog A (213 aa).

The next 4 membrane-spanning stretches (helical) occupy residues 32–52 (PLATFFHLFFRVSAIVTYVSC), 54–74 (WFSKSFVGCFVMVLLLLSLDF), 123–143 (IFWLGLIICPMIWIVFFFSTL), and 150–170 (WLALVVAGISLQAANLYGYIL).

This sequence belongs to the TVP23 family.

It localises to the membrane. The protein is Golgi apparatus membrane protein TVP23 homolog A (TVP23A) of Homo sapiens (Human).